The following is a 420-amino-acid chain: Phosphoribosylamine--glycine ligase (420 aa).

The region spanning 108–314 (KQFMEKYAIP…FAALIDALLH (207 aa)) is the ATP-grasp domain. ATP is bound at residue 134 to 195 (LDERGVPIVI…EDFLAGEEFS (62 aa)). The Mg(2+) site is built by E284 and N286.

The protein belongs to the GARS family. Mg(2+) is required as a cofactor. It depends on Mn(2+) as a cofactor.

The enzyme catalyses 5-phospho-beta-D-ribosylamine + glycine + ATP = N(1)-(5-phospho-beta-D-ribosyl)glycinamide + ADP + phosphate + H(+). It participates in purine metabolism; IMP biosynthesis via de novo pathway; N(1)-(5-phospho-D-ribosyl)glycinamide from 5-phospho-alpha-D-ribose 1-diphosphate: step 2/2. This chain is Phosphoribosylamine--glycine ligase, found in Listeria monocytogenes serotype 4b (strain F2365).